Here is a 449-residue protein sequence, read N- to C-terminus: C4-dicarboxylate transport protein 1 (449 aa).

8 helical membrane passes run 16 to 38 (FLQV…DLAV), 53 to 71 (MLIA…SGAG), 84 to 106 (VIYF…YSLG), 157 to 176 (ILQV…LVGE), 197 to 219 (GMIV…ARYG), 229 to 251 (LVLV…VLRL), 311 to 333 (GFSI…PLAM), and 358 to 380 (LVIL…VLVL).

It belongs to the dicarboxylate/amino acid:cation symporter (DAACS) (TC 2.A.23) family.

It is found in the cell inner membrane. Responsible for the transport of dicarboxylates such as succinate, fumarate, and malate from the periplasm across the membrane. The chain is C4-dicarboxylate transport protein 1 (dctA1) from Pseudomonas aeruginosa (strain ATCC 15692 / DSM 22644 / CIP 104116 / JCM 14847 / LMG 12228 / 1C / PRS 101 / PAO1).